A 256-amino-acid polypeptide reads, in one-letter code: Chlorophyll a-b binding protein CP24 10A, chloroplastic (256 aa).

The next 2 helical transmembrane spans lie at 106–126 (WAMAAVLGIFVGQAWSGIPWF) and 134–154 (AIAPFSFGTLLGTQLILMGWV).

Belongs to the ELIP/psbS family.

The protein localises to the plastid. The protein resides in the chloroplast thylakoid membrane. In Solanum lycopersicum (Tomato), this protein is Chlorophyll a-b binding protein CP24 10A, chloroplastic (CAP10A).